Consider the following 217-residue polypeptide: 3,4-dihydroxy-2-butanone 4-phosphate synthase (217 aa).

Residues 37 to 38, aspartate 42, 150 to 154, and glutamate 174 each bind D-ribulose 5-phosphate; these read RE and RRGHT. Mg(2+) is bound at residue glutamate 38. Position 153 (histidine 153) interacts with Mg(2+).

This sequence belongs to the DHBP synthase family. As to quaternary structure, homodimer. Requires Mg(2+) as cofactor. Mn(2+) serves as cofactor.

It catalyses the reaction D-ribulose 5-phosphate = (2S)-2-hydroxy-3-oxobutyl phosphate + formate + H(+). It participates in cofactor biosynthesis; riboflavin biosynthesis; 2-hydroxy-3-oxobutyl phosphate from D-ribulose 5-phosphate: step 1/1. In terms of biological role, catalyzes the conversion of D-ribulose 5-phosphate to formate and 3,4-dihydroxy-2-butanone 4-phosphate. This chain is 3,4-dihydroxy-2-butanone 4-phosphate synthase, found in Shewanella oneidensis (strain ATCC 700550 / JCM 31522 / CIP 106686 / LMG 19005 / NCIMB 14063 / MR-1).